Reading from the N-terminus, the 148-residue chain is Transcription antitermination protein NusB (148 aa).

The protein belongs to the NusB family.

Functionally, involved in transcription antitermination. Required for transcription of ribosomal RNA (rRNA) genes. Binds specifically to the boxA antiterminator sequence of the ribosomal RNA (rrn) operons. This Nitrosococcus oceani (strain ATCC 19707 / BCRC 17464 / JCM 30415 / NCIMB 11848 / C-107) protein is Transcription antitermination protein NusB.